A 209-amino-acid chain; its full sequence is A-type ATP synthase subunit D (209 aa).

The protein belongs to the V-ATPase D subunit family. As to quaternary structure, has multiple subunits with at least A(3), B(3), C, D, E, F, H, I and proteolipid K(x).

It localises to the cell membrane. Its function is as follows. Component of the A-type ATP synthase that produces ATP from ADP in the presence of a proton gradient across the membrane. This chain is A-type ATP synthase subunit D, found in Sulfolobus acidocaldarius (strain ATCC 33909 / DSM 639 / JCM 8929 / NBRC 15157 / NCIMB 11770).